A 103-amino-acid polypeptide reads, in one-letter code: Phosphoribosyl-ATP pyrophosphatase (103 aa).

This sequence belongs to the PRA-PH family.

It is found in the cytoplasm. It catalyses the reaction 1-(5-phospho-beta-D-ribosyl)-ATP + H2O = 1-(5-phospho-beta-D-ribosyl)-5'-AMP + diphosphate + H(+). Its pathway is amino-acid biosynthesis; L-histidine biosynthesis; L-histidine from 5-phospho-alpha-D-ribose 1-diphosphate: step 2/9. The polypeptide is Phosphoribosyl-ATP pyrophosphatase (Cereibacter sphaeroides (strain KD131 / KCTC 12085) (Rhodobacter sphaeroides)).